The following is a 168-amino-acid chain: Dihydrofolate reductase (168 aa).

A DHFR domain is found at 1–164; the sequence is MIIGIWAEDE…YTFTIKKYEK (164 aa). A substrate-binding site is contributed by 5 to 7; it reads IWA. Residues 6 to 7 and 14 to 19 each bind NADP(+); these read WA and IGEADK. Residue glutamate 27 participates in substrate binding. NADP(+) is bound at residue 43–46; sequence GRKT. Arginine 58 contacts substrate. Residues 63–66 and 99–104 contribute to the NADP(+) site; these read LTRD and TGGAEI. Position 118 (threonine 118) interacts with substrate.

This sequence belongs to the dihydrofolate reductase family.

It carries out the reaction (6S)-5,6,7,8-tetrahydrofolate + NADP(+) = 7,8-dihydrofolate + NADPH + H(+). It functions in the pathway cofactor biosynthesis; tetrahydrofolate biosynthesis; 5,6,7,8-tetrahydrofolate from 7,8-dihydrofolate: step 1/1. Key enzyme in folate metabolism. Catalyzes an essential reaction for de novo glycine and purine synthesis, and for DNA precursor synthesis. This is Dihydrofolate reductase (folA) from Lactococcus lactis subsp. lactis (strain IL1403) (Streptococcus lactis).